We begin with the raw amino-acid sequence, 506 residues long: Lysine--tRNA ligase (506 aa).

The Mg(2+) site is built by Glu-416 and Glu-423.

This sequence belongs to the class-II aminoacyl-tRNA synthetase family. Homodimer. The cofactor is Mg(2+).

It is found in the cytoplasm. The enzyme catalyses tRNA(Lys) + L-lysine + ATP = L-lysyl-tRNA(Lys) + AMP + diphosphate. This is Lysine--tRNA ligase from Sodalis glossinidius (strain morsitans).